Reading from the N-terminus, the 184-residue chain is Mitochondrial import inner membrane translocase subunit Tim22 (184 aa).

Cystine bridges form between Cys59–Cys131 and Cys150–Cys169. The next 3 helical transmembrane spans lie at 64 to 84 (ALAC…TAGI), 115 to 133 (YAKN…ECLV), and 160 to 180 (AGLK…AVID).

This sequence belongs to the Tim17/Tim22/Tim23 family. In terms of assembly, core component of the TIM22 complex.

It is found in the mitochondrion inner membrane. Functionally, essential core component of the TIM22 complex, a complex that mediates the import and insertion of multi-pass transmembrane proteins into the mitochondrial inner membrane. In the TIM22 complex, it constitutes the voltage-activated and signal-gated channel. Forms a twin-pore translocase that uses the membrane potential as external driving force in 2 voltage-dependent steps. In Xenopus laevis (African clawed frog), this protein is Mitochondrial import inner membrane translocase subunit Tim22 (timm22).